The sequence spans 305 residues: Glycine--tRNA ligase alpha subunit (305 aa).

This sequence belongs to the class-II aminoacyl-tRNA synthetase family. In terms of assembly, tetramer of two alpha and two beta subunits.

Its subcellular location is the cytoplasm. It carries out the reaction tRNA(Gly) + glycine + ATP = glycyl-tRNA(Gly) + AMP + diphosphate. The sequence is that of Glycine--tRNA ligase alpha subunit from Heliobacterium modesticaldum (strain ATCC 51547 / Ice1).